A 478-amino-acid chain; its full sequence is Odorant receptor coreceptor (478 aa).

At 1 to 41 (MQVQPTKYVGLVADLMPNIRLMQASGHFLFRYVTGPILIRK) the chain is on the cytoplasmic side. Residues 42–62 (VYSWWTLAMVLIQFFAILGNL) traverse the membrane as a helical segment. At 63 to 73 (ATNADDVNELT) the chain is on the extracellular side. Residues 74–94 (ANTITTLFFTHSVTKFIYFAV) form a helical membrane-spanning segment. Residues 95–133 (NSENFYRTLAIWNQTNTHPLFAESDARYHSIALAKMRKL) lie on the Cytoplasmic side of the membrane. A helical transmembrane segment spans residues 134–154 (LVLVMATTVLSVVAWVTITFF). Residues 155-188 (GESVKTVLDKATNETYTVDIPRLPIKSWYPWNAM) are Extracellular-facing. Asparagine 167 is a glycosylation site (N-linked (GlcNAc...) asparagine). A helical transmembrane segment spans residues 189–209 (SGPAYIFSFIYQIYFLLFSMV). Residues 210–338 (QSNLADVMFC…AIKYWVERHK (129 aa)) lie on the Cytoplasmic side of the membrane. Residues 339-361 (HVVRLVSAIGDTYGPALLLHMLT) form a helical membrane-spanning segment. The Extracellular portion of the chain corresponds to 362–382 (STIKLTLLAYQATKIDGVNVY). Residues 383–403 (GLTVIGYLCYALAQVFLFCIF) form a helical membrane-spanning segment. Topologically, residues 404–454 (GNRLIEESSSVMEAAYSCHWYDGSEEAKTFVQIVCQQCQKAMTISGAKFFT) are cytoplasmic. A helical transmembrane segment spans residues 455-475 (VSLDLFASVLGAVVTYFMVLV). The Extracellular segment spans residues 476-478 (QLK).

Belongs to the insect chemoreceptor superfamily. Heteromeric odorant receptor channel (TC 1.A.69) family. Orco subfamily. Heterodimer with conventional odorant receptors (ORs). Complexes exist early in the endomembrane system in olfactory sensory neurons (OSNs), coupling these complexes to the conserved ciliary trafficking pathway. As to expression, expressed in olfactory and gustatory organs of both adult and immature stages. Highest expression is seen in adult antennae and the maxillary palps. Lower expression also seen in proboscis and legs. Within the antenna, expression originates in cell bodies and projects into the lumen of an individual sensillum, presumably along the dendritic extension of the neuron. Within the maxillary palps, expression is seen in a small number of cell bodies and in projections into the sensillar cone. Within the probiscus, expression is seen in a single type of sensillum on the outer surface of the labellar lobes.

The protein localises to the cell membrane. Functionally, odorant coreceptor which complexes with conventional odorant receptors (ORs) to form odorant-sensing units, providing sensitive and prolonged odorant signaling and calcium permeability. Orco is a universal and integral part of the functional odorant receptor, involved in the dendritic localization of other olfactory receptors. Can form functional ion channels in the absence of an odor-binding OR. Plays a key role in preferred attraction of females for humans over non-human hosts for blood feeding. Human attraction plays a crucial role in the transmission of Plasmodium protozoans by the mosquito leading to infection diseases like malaria. Also required for the response to N,N-Diethyl-meta-toluamide (DEET), the most widely used insect repellent worldwide. This is Odorant receptor coreceptor (Orco) from Anopheles gambiae (African malaria mosquito).